The chain runs to 402 residues: Putative RNA-guided DNA endonuclease InsQ (402 aa).

Residues aspartate 183 and glutamate 267 contribute to the active site. Cysteine 334, cysteine 337, cysteine 353, and cysteine 356 together coordinate Zn(2+). Aspartate 363 is a catalytic residue.

This sequence in the N-terminal section; belongs to the transposase 2 family. It in the C-terminal section; belongs to the transposase 35 family.

An RNA-guided dsDNA endonuclease. When guided by an RNA derived from the right-end element of its insertion sequence element (IS), cleaves DNA downstream of the transposon-associated motif (TAM). Cleaves supercoiled and linear DNA in a staggered manner 15-21 bases from the TAM yielding 5'-overhangs. Binds reRNA, an approximately 150 nucleotide base sRNA derived from the 3' end of its own gene, the right end (RE) of the insertion sequence (IS) plus sequence downstream of the IS. Functionally, not required for transposition of the insertion element. The corresponding transposase in strains MG1655 and W3110 is a truncated pseudogene (yncK). The chain is Putative RNA-guided DNA endonuclease InsQ (insQ) from Escherichia coli (strain K12).